The primary structure comprises 196 residues: NADH-quinone oxidoreductase subunit B (196 aa).

[4Fe-4S] cluster is bound by residues Cys-63, Cys-64, Cys-129, and Cys-159.

It belongs to the complex I 20 kDa subunit family. In terms of assembly, NDH-1 is composed of 14 different subunits. Subunits NuoB, C, D, E, F, and G constitute the peripheral sector of the complex. It depends on [4Fe-4S] cluster as a cofactor.

The protein localises to the cell inner membrane. The catalysed reaction is a quinone + NADH + 5 H(+)(in) = a quinol + NAD(+) + 4 H(+)(out). Its function is as follows. NDH-1 shuttles electrons from NADH, via FMN and iron-sulfur (Fe-S) centers, to quinones in the respiratory chain. The immediate electron acceptor for the enzyme in this species is believed to be a menaquinone. Couples the redox reaction to proton translocation (for every two electrons transferred, four hydrogen ions are translocated across the cytoplasmic membrane), and thus conserves the redox energy in a proton gradient. This Bacteroides fragilis (strain ATCC 25285 / DSM 2151 / CCUG 4856 / JCM 11019 / LMG 10263 / NCTC 9343 / Onslow / VPI 2553 / EN-2) protein is NADH-quinone oxidoreductase subunit B.